A 140-amino-acid chain; its full sequence is Protein ARABIDOPSIS THALIANA ANTHER 7 (140 aa).

The N-terminal stretch at M1–S20 is a signal peptide. 4 cysteine pairs are disulfide-bonded: C29–C87, C39–C54, C55–C111, and C85–C125.

It belongs to the plant LTP family. In terms of tissue distribution, tapetum-specific. Also present in pollen.

Its subcellular location is the endoplasmic reticulum lumen. In Arabidopsis thaliana (Mouse-ear cress), this protein is Protein ARABIDOPSIS THALIANA ANTHER 7.